The primary structure comprises 394 residues: S-adenosylmethionine synthase 2 (394 aa).

Glutamate 11 contacts Mg(2+). An ATP-binding site is contributed by histidine 17. Residue glutamate 45 participates in K(+) binding. L-methionine is bound by residues glutamate 58 and glutamine 101. ATP contacts are provided by residues 169 to 171 (DGK), 237 to 240 (SGRF), aspartate 248, 254 to 255 (RK), alanine 271, lysine 275, and lysine 279. Position 248 (aspartate 248) interacts with L-methionine. Residue lysine 279 coordinates L-methionine.

This sequence belongs to the AdoMet synthase family. As to quaternary structure, homotetramer. Mn(2+) serves as cofactor. Requires Mg(2+) as cofactor. Co(2+) is required as a cofactor. The cofactor is K(+).

It is found in the cytoplasm. It carries out the reaction L-methionine + ATP + H2O = S-adenosyl-L-methionine + phosphate + diphosphate. It participates in amino-acid biosynthesis; S-adenosyl-L-methionine biosynthesis; S-adenosyl-L-methionine from L-methionine: step 1/1. Its function is as follows. Catalyzes the formation of S-adenosylmethionine from methionine and ATP. The reaction comprises two steps that are both catalyzed by the same enzyme: formation of S-adenosylmethionine (AdoMet) and triphosphate, and subsequent hydrolysis of the triphosphate. In Hordeum vulgare (Barley), this protein is S-adenosylmethionine synthase 2 (SAM2).